We begin with the raw amino-acid sequence, 391 residues long: Cdc42 effector protein 1 (391 aa).

Phosphoserine occurs at positions 19 and 27. T34 carries the phosphothreonine modification. The CRIB domain maps to 38-52; the sequence is ISHPLGDFRHTMHVG. S39 carries the post-translational modification Phosphoserine. The residue at position 53 (R53) is an Omega-N-methylarginine. Residues S65, S73, S77, S101, S113, S121, and S139 each carry the phosphoserine modification. The segment at 163-189 is disordered; it reads ISRLPRSEKPHDRDRDGSFPSEPGLRR. Basic and acidic residues predominate over residues 167-179; it reads PRSEKPHDRDRDG. Phosphoserine is present on residues S180, S190, S192, and S195. A run of 8 repeats spans residues 220 to 226, 227 to 233, 234 to 240, 241 to 247, 248 to 254, 255 to 261, 262 to 268, and 269 to 275. The 8 X 7 AA tandem repeats of [PT]-[AT]-A-[ENT]-[PT]-[PTS]-[AG] stretch occupies residues 220–275; it reads PAAETPAPAANPPAPTANPTGPAANPPATTANPPAPAANPSAPAATPTGPAANPPA. The tract at residues 221-338 is disordered; that stretch reads AAETPAPAAN…HHYPEMDARQ (118 aa). The span at 236-270 shows a compositional bias: low complexity; it reads ANPTGPAANPPATTANPPAPAANPSAPAATPTGPA. The residue at position 303 (S303) is a Phosphoserine. Residues 327-338 show a composition bias toward basic and acidic residues; the sequence is GGHHYPEMDARQ. Residues S350 and S353 each carry the phosphoserine modification. A disordered region spans residues 354-391; that stretch reads LDEEWRAPQAGSRTPVPSTVQANTFEFADAEEDDEVKV. The segment covering 364 to 377 has biased composition (polar residues); the sequence is GSRTPVPSTVQANT. Residues 381-391 are compositionally biased toward acidic residues; sequence ADAEEDDEVKV.

Belongs to the BORG/CEP family. In terms of assembly, interacts with RHOQ and CDC42, in a GTP-dependent manner. Endothelial and bone marrow stromal cells.

The protein localises to the endomembrane system. It localises to the cytoplasm. It is found in the cytoskeleton. Its function is as follows. Probably involved in the organization of the actin cytoskeleton. Induced membrane extensions in fibroblasts. In Homo sapiens (Human), this protein is Cdc42 effector protein 1 (CDC42EP1).